The following is a 313-amino-acid chain: Glycine--tRNA ligase alpha subunit (313 aa).

It belongs to the class-II aminoacyl-tRNA synthetase family. Tetramer of two alpha and two beta subunits.

It localises to the cytoplasm. The enzyme catalyses tRNA(Gly) + glycine + ATP = glycyl-tRNA(Gly) + AMP + diphosphate. The protein is Glycine--tRNA ligase alpha subunit of Leuconostoc mesenteroides subsp. mesenteroides (strain ATCC 8293 / DSM 20343 / BCRC 11652 / CCM 1803 / JCM 6124 / NCDO 523 / NBRC 100496 / NCIMB 8023 / NCTC 12954 / NRRL B-1118 / 37Y).